Consider the following 244-residue polypeptide: Type III pantothenate kinase (244 aa).

Residue 12–19 coordinates ATP; sequence VVGNTHVR. Residues tyrosine 79 and 83 to 86 contribute to the substrate site; that span reads GLDR. The active-site Proton acceptor is aspartate 85. Aspartate 105 contributes to the K(+) binding site. Threonine 108 serves as a coordination point for ATP. Threonine 163 is a binding site for substrate.

It belongs to the type III pantothenate kinase family. In terms of assembly, homodimer. NH4(+) is required as a cofactor. It depends on K(+) as a cofactor.

The protein localises to the cytoplasm. The enzyme catalyses (R)-pantothenate + ATP = (R)-4'-phosphopantothenate + ADP + H(+). The protein operates within cofactor biosynthesis; coenzyme A biosynthesis; CoA from (R)-pantothenate: step 1/5. In terms of biological role, catalyzes the phosphorylation of pantothenate (Pan), the first step in CoA biosynthesis. The sequence is that of Type III pantothenate kinase from Synechococcus sp. (strain JA-3-3Ab) (Cyanobacteria bacterium Yellowstone A-Prime).